A 210-amino-acid chain; its full sequence is Small ribosomal subunit protein uS3 (210 aa).

Residues 38-106 (LKSFLKKRLY…EVYLNIQEVR (69 aa)) enclose the KH type-2 domain.

The protein belongs to the universal ribosomal protein uS3 family. As to quaternary structure, part of the 30S ribosomal subunit. Forms a tight complex with proteins S10 and S14.

Binds the lower part of the 30S subunit head. Binds mRNA in the 70S ribosome, positioning it for translation. The protein is Small ribosomal subunit protein uS3 of Geotalea daltonii (strain DSM 22248 / JCM 15807 / FRC-32) (Geobacter daltonii).